Reading from the N-terminus, the 540-residue chain is NADH-quinone oxidoreductase subunit N 1 (540 aa).

13 helical membrane-spanning segments follow: residues 11–31 (ILPELMLLLLGLLVLGSDVLT), 52–72 (AVGLGLVFIVGLVQSRFLFTV), 109–129 (FTMIARLTFIGAAFLTTLLAM), 142–162 (ALLIFSTLGMSIMAAATEFIL), 195–215 (FLFGSLSSAIFLYGISLTYGF), 250–270 (LILGMLFIIAGLGYKISVVPF), 284–306 (PVTAFLSTASKAAGFLLLYRLLT), 324–344 (WTSILAILALVTVIVGNLAAL), 352–372 (LLAYSSIGHAGFLLLAVLLWA), 386–406 (LIYYLIVYSLTNLGSFGVLAV), 431–451 (LMMTILILSLAGIPPLAGFWA), 464–486 (AVPLVTIAVIMTVVSLYYYLRFL), and 508–528 (AAIILSTVLVVLLGLLPNLIW).

It belongs to the complex I subunit 2 family. In terms of assembly, NDH-1 is composed of 14 different subunits. Subunits NuoA, H, J, K, L, M, N constitute the membrane sector of the complex.

Its subcellular location is the cell membrane. The enzyme catalyses a quinone + NADH + 5 H(+)(in) = a quinol + NAD(+) + 4 H(+)(out). In terms of biological role, NDH-1 shuttles electrons from NADH, via FMN and iron-sulfur (Fe-S) centers, to quinones in the respiratory chain. The immediate electron acceptor for the enzyme in this species is believed to be ubiquinone. Couples the redox reaction to proton translocation (for every two electrons transferred, four hydrogen ions are translocated across the cytoplasmic membrane), and thus conserves the redox energy in a proton gradient. In Roseiflexus castenholzii (strain DSM 13941 / HLO8), this protein is NADH-quinone oxidoreductase subunit N 1.